The sequence spans 546 residues: Germacrene-D synthase (546 aa).

Mg(2+) is bound by residues aspartate 303, aspartate 307, aspartate 448, and glutamate 456. Residues 303–307 (DDIYD) carry the DDXXD motif motif.

This sequence belongs to the terpene synthase family. Requires Mg(2+) as cofactor. Mn(2+) is required as a cofactor.

It carries out the reaction (2E,6E)-farnesyl diphosphate = (-)-germacrene D + diphosphate. It functions in the pathway secondary metabolite biosynthesis; terpenoid biosynthesis. In terms of biological role, sesquiterpene synthase that catalyzes the formation of germacrene D from trans,trans-farnesyl diphosphate (FPP). The sequence is that of Germacrene-D synthase (GDS) from Ocimum basilicum (Sweet basil).